A 998-amino-acid chain; its full sequence is tRNA (34-2'-O)-methyltransferase regulator WDR6 (998 aa).

11 WD repeats span residues 148–185 (LYYT…ESDP), 200–239 (AHNG…DWTT), 250–291 (GHSS…ILKR), 294–333 (QFGA…NRPK), 476–515 (NNRE…DDFQ), 527–566 (MGSN…STLR), 567–608 (VSQR…LLQL), 664–704 (RNCN…LSQR), 779–821 (ARLM…QLDL), 826–865 (DIQR…TYFQ), and 868–911 (LHVT…VEQK).

This sequence belongs to the WD repeat WDR6 family. In terms of assembly, interacts with Trm7-34.

The protein localises to the cytoplasm. Together with methyltransferase Trm7-34, methylates the 2'-O-ribose of nucleotides at position 34 of the anticodon loop of substrate tRNAs. This chain is tRNA (34-2'-O)-methyltransferase regulator WDR6, found in Drosophila melanogaster (Fruit fly).